The chain runs to 142 residues: Large ribosomal subunit protein uL13 (142 aa).

Belongs to the universal ribosomal protein uL13 family. In terms of assembly, part of the 50S ribosomal subunit.

In terms of biological role, this protein is one of the early assembly proteins of the 50S ribosomal subunit, although it is not seen to bind rRNA by itself. It is important during the early stages of 50S assembly. The chain is Large ribosomal subunit protein uL13 from Shewanella frigidimarina (strain NCIMB 400).